The chain runs to 221 residues: ATP-dependent dethiobiotin synthetase BioD (221 aa).

11–16 lines the ATP pocket; the sequence is DVGKTF. T15 provides a ligand contact to Mg(2+). The active site involves K35. A substrate-binding site is contributed by T39. Residues D44 and 103–106 contribute to the ATP site; that span reads EGAG. Positions 44 and 103 each coordinate Mg(2+).

It belongs to the dethiobiotin synthetase family. As to quaternary structure, homodimer. Mg(2+) is required as a cofactor.

Its subcellular location is the cytoplasm. The catalysed reaction is (7R,8S)-7,8-diammoniononanoate + CO2 + ATP = (4R,5S)-dethiobiotin + ADP + phosphate + 3 H(+). It participates in cofactor biosynthesis; biotin biosynthesis; biotin from 7,8-diaminononanoate: step 1/2. Functionally, catalyzes a mechanistically unusual reaction, the ATP-dependent insertion of CO2 between the N7 and N8 nitrogen atoms of 7,8-diaminopelargonic acid (DAPA, also called 7,8-diammoniononanoate) to form a ureido ring. This chain is ATP-dependent dethiobiotin synthetase BioD, found in Leptospira interrogans serogroup Icterohaemorrhagiae serovar copenhageni (strain Fiocruz L1-130).